Here is a 199-residue protein sequence, read N- to C-terminus: Recombination protein RecR (199 aa).

Residues 57 to 72 form a C4-type zinc finger; it reads CEICGNMDTKNICHIC. The Toprim domain maps to 80–175; that stretch reads STIAIVETVA…KISRLASGIP (96 aa).

This sequence belongs to the RecR family.

In terms of biological role, may play a role in DNA repair. It seems to be involved in an RecBC-independent recombinational process of DNA repair. It may act with RecF and RecO. This chain is Recombination protein RecR, found in Rickettsia typhi (strain ATCC VR-144 / Wilmington).